Here is a 400-residue protein sequence, read N- to C-terminus: Putative F-box protein At1g30920 (400 aa).

In terms of domain architecture, F-box spans 4–49; that stretch reads EENTDSIPIDLILDILSRLPSKSIARCRCVSKLWESMIRQSYFTEL.

The protein is Putative F-box protein At1g30920 of Arabidopsis thaliana (Mouse-ear cress).